We begin with the raw amino-acid sequence, 327 residues long: 2-methoxy-6-polyprenyl-1,4-benzoquinol methylase, mitochondrial (327 aa).

Residues 1–42 (MAAPGSCALWSYCGRGWSRAMRGCQLLGLRSSWPGDLLSARL) constitute a mitochondrion transit peptide. S-adenosyl-L-methionine is bound by residues T117, D171, and 199–200 (DA).

The protein belongs to the class I-like SAM-binding methyltransferase superfamily. MenG/UbiE family. As to quaternary structure, component of a multi-subunit COQ enzyme complex, composed of at least COQ3, COQ4, COQ5, COQ6, COQ7 and COQ9. Interacts with PYURF; the interaction is direct, stabilizes COQ5 protein and associates PYURF with COQ enzyme complex. As to expression, widely expressed, with highest levels in liver, lung, placenta and skeletal muscle.

The protein resides in the mitochondrion inner membrane. It catalyses the reaction 2-methoxy-6-(all-trans-decaprenyl)benzene-1,4-diol + S-adenosyl-L-methionine = 5-methoxy-2-methyl-3-(all-trans-decaprenyl)benzene-1,4-diol + S-adenosyl-L-homocysteine + H(+). Its pathway is cofactor biosynthesis; ubiquinone biosynthesis. Functionally, methyltransferase required for the conversion of 2-decaprenyl-6-methoxy-1,4-benzoquinol (DDMQH2) to 2-decaprenyl-3-methyl-6-methoxy-1,4-benzoquinol (DMQH2). The polypeptide is 2-methoxy-6-polyprenyl-1,4-benzoquinol methylase, mitochondrial (Homo sapiens (Human)).